Here is a 228-residue protein sequence, read N- to C-terminus: MTAELNFLDLFLKASIVVQLVIVILISFSIISWAIIIQRSRILTNALKEARTFEDRFWSGEDLNKLYEGLSNRRDGLTGSEQIFCVGFKEFSRLKQVNPDAPEAIIKGTMRAMNLAMNREIESLENRVPFLATVASVSPYIGLFGTVWGIMHAFMALSGAKQATLQMVAPGIAEALIATAIGLFAAIPAVMAYNRLSLRVNAIEQDYGNFIDEFTTILHRQAFGKAPH.

The next 3 helical transmembrane spans lie at 16-36 (IVVQLVIVILISFSIISWAII), 137-157 (VSPYIGLFGTVWGIMHAFMAL), and 172-192 (IAEALIATAIGLFAAIPAVMA).

It belongs to the ExbB/TolQ family. The Tol-Pal system is composed of five core proteins: the inner membrane proteins TolA, TolQ and TolR, the periplasmic protein TolB and the outer membrane protein Pal. They form a network linking the inner and outer membranes and the peptidoglycan layer.

It localises to the cell inner membrane. Functionally, part of the Tol-Pal system, which plays a role in outer membrane invagination during cell division and is important for maintaining outer membrane integrity. In Haemophilus influenzae (strain ATCC 51907 / DSM 11121 / KW20 / Rd), this protein is Tol-Pal system protein TolQ.